The chain runs to 248 residues: AA9 family lytic polysaccharide monooxygenase G (248 aa).

An N-terminal signal peptide occupies residues 1–21 (MLPNAAGLLVAGVVSLSGVAA). Residue His22 participates in Cu(2+) binding. A glycan (N-linked (GlcNAc...) asparagine) is linked at Asn58. Cys77 and Cys195 are oxidised to a cystine. Residue His107 participates in Cu(2+) binding. Gln190 serves as a coordination point for O2. Tyr192 lines the Cu(2+) pocket. Asn203 is a glycosylation site (N-linked (GlcNAc...) asparagine).

It belongs to the polysaccharide monooxygenase AA9 family. It depends on Cu(2+) as a cofactor.

It is found in the secreted. It catalyses the reaction [(1-&gt;4)-beta-D-glucosyl]n+m + reduced acceptor + O2 = 4-dehydro-beta-D-glucosyl-[(1-&gt;4)-beta-D-glucosyl]n-1 + [(1-&gt;4)-beta-D-glucosyl]m + acceptor + H2O.. Its function is as follows. Lytic polysaccharide monooxygenase (LPMO) that depolymerizes crystalline and amorphous polysaccharides via the oxidation of scissile alpha- or beta-(1-4)-glycosidic bonds, yielding C1 or C4 oxidation products. Catalysis by LPMOs requires the reduction of the active-site copper from Cu(II) to Cu(I) by a reducing agent and H(2)O(2) or O(2) as a cosubstrate. This is AA9 family lytic polysaccharide monooxygenase G from Malbranchea cinnamomea (Thermophilic fungus).